Consider the following 427-residue polypeptide: Trigger factor (427 aa).

In terms of domain architecture, PPIase FKBP-type spans 163 to 248; that stretch reads GDTVVIDFVG…IHEVKTKEVP (86 aa).

This sequence belongs to the FKBP-type PPIase family. Tig subfamily.

It is found in the cytoplasm. It carries out the reaction [protein]-peptidylproline (omega=180) = [protein]-peptidylproline (omega=0). In terms of biological role, involved in protein export. Acts as a chaperone by maintaining the newly synthesized protein in an open conformation. Functions as a peptidyl-prolyl cis-trans isomerase. This is Trigger factor from Streptococcus agalactiae serotype Ia (strain ATCC 27591 / A909 / CDC SS700).